The chain runs to 445 residues: MARLFGTDGVRGVANRELTPELAMALGSAAARRLGRAGATRRRVAVVGRDPRASGEMLEAAVIAGIAGEGVDTLRVGILPTPAVAYLTSAYDADFGVMISASHNPMPDNGIKIFGPGGHKLDDATEDRIEELVHQGPGERPTGAGIGRVVDAEDALERYLRHVGKAATTRLDPLTVVVDCAHGAASVAAPRAYRAAGANVIPIHADPDGLNINDGCGSTHMESLRSAVVSYGADLGLAHDGDADRCLAVDAHGRVIDGDAIMVVLALAMQQSGELVSDTLVATVMSNMGLHLAMRSADIEVRTTGVGDRYVLEELRAGQFSLGGEQSGHIVLPSFGTTGDGIVTGLRLMARMAQTGRSLADLAQPMQTLPQVLINVEVADKTTVADAPSVRDAVAQVEAELGDTGRILLRPSGTEQVVRVMVEAADEDTARQMAVRVADSVSAES.

The active-site Phosphoserine intermediate is S102. S102, D240, D242, and D244 together coordinate Mg(2+). The residue at position 102 (S102) is a Phosphoserine.

This sequence belongs to the phosphohexose mutase family. Mg(2+) serves as cofactor. Activated by phosphorylation.

The enzyme catalyses alpha-D-glucosamine 1-phosphate = D-glucosamine 6-phosphate. Catalyzes the conversion of glucosamine-6-phosphate to glucosamine-1-phosphate. In Mycolicibacterium gilvum (strain PYR-GCK) (Mycobacterium gilvum (strain PYR-GCK)), this protein is Phosphoglucosamine mutase.